Consider the following 123-residue polypeptide: Histone H2B.1/H2B.2 (123 aa).

Positions 1 to 30 (MPPKVSGKAAKKAGKAQKNITKGDKKKNRK) are disordered. Residue S110 is glycosylated (O-linked (GlcNAc) serine). K118 is covalently cross-linked (Glycyl lysine isopeptide (Lys-Gly) (interchain with G-Cter in ubiquitin)).

It belongs to the histone H2B family. In terms of assembly, the nucleosome is a histone octamer containing two molecules each of H2A, H2B, H3 and H4 assembled in one H3-H4 heterotetramer and two H2A-H2B heterodimers. The octamer wraps approximately 147 bp of DNA. Monoubiquitination of Lys-118 gives a specific tag for epigenetic transcriptional activation and is also prerequisite for histone H3 'Lys-4' and 'Lys-79' methylation. Post-translationally, glcNAcylation at Ser-110 promotes monoubiquitination of Lys-118. It fluctuates in response to extracellular glucose, and associates with transcribed genes.

Its subcellular location is the nucleus. The protein resides in the chromosome. Its function is as follows. Core component of nucleosome. Nucleosomes wrap and compact DNA into chromatin, limiting DNA accessibility to the cellular machineries which require DNA as a template. Histones thereby play a central role in transcription regulation, DNA repair, DNA replication and chromosomal stability. DNA accessibility is regulated via a complex set of post-translational modifications of histones, also called histone code, and nucleosome remodeling. The chain is Histone H2B.1/H2B.2 from Tigriopus californicus (Marine copepod).